The chain runs to 219 residues: Ras-related protein Rab-3D (219 aa).

An N-acetylalanine modification is found at A2. 29-37 (GNSSVGKTS) is a GDP binding site. The GTP site is built by S31, S32, V33, G34, K35, T36, S37, P49, and S53. A Mg(2+)-binding site is contributed by T36. The Switch 1 motif lies at 49-58 (PAFVSTVGID). Positions 54 and 77 each coordinate Mg(2+). G80 contacts GTP. The Switch 2 motif lies at 80 to 96 (GQERYRTITTAYYRGAM). T86 is subject to Phosphothreonine; by LRRK2. N135, K136, D138, A166, and K167 together coordinate GTP. Residues 135–138 (NKCD) and 165–167 (SAK) each bind GDP. Phosphoserine is present on S190. The span at 190–199 (SLEPSSSSGS) shows a compositional bias: low complexity. The segment at 190–219 (SLEPSSSSGSNGKGPAVGDAPAPQPSSCSC) is disordered. Residues C217 and C219 are each lipidated (S-geranylgeranyl cysteine). C219 is subject to Cysteine methyl ester.

The protein belongs to the small GTPase superfamily. Rab family. Interacts with RIMS1, RIMS2, RPH3A, RPH3AL and RAB3IP. The GTP-bound form interacts with REP15. Interacts with CHM and CHML; phosphorylation at Thr-86 disrupts these interactions. Interacts with MADD (via uDENN domain); the GTP-bound form is preferred for interaction. Mg(2+) serves as cofactor. Phosphorylation of Thr-86 in the switch II region by LRRK2 prevents the association of RAB regulatory proteins, including CHM and CHML. As to expression, highly expressed in granulocytes of peripheral blood. Constitutively expressed at low levels in all hematopoietic cell lines investigated.

The protein resides in the cell membrane. It catalyses the reaction GTP + H2O = GDP + phosphate + H(+). Regulated by guanine nucleotide exchange factors (GEFs) which promote the exchange of bound GDP for free GTP. Regulated by GTPase activating proteins (GAPs) which increase the GTP hydrolysis activity. Inhibited by GDP dissociation inhibitors (GDIs) which prevent Rab-GDP dissociation. Its function is as follows. The small GTPases Rab are key regulators of intracellular membrane trafficking, from the formation of transport vesicles to their fusion with membranes. Rabs cycle between an inactive GDP-bound form and an active GTP-bound form that is able to recruit to membranes different sets of downstream effectors directly responsible for vesicle formation, movement, tethering and fusion. RAB3D may be involved in the insulin-induced exocytosis of GLUT4-containing vesicles in adipocytes. In Homo sapiens (Human), this protein is Ras-related protein Rab-3D.